The chain runs to 787 residues: Replication origin-binding protein (787 aa).

One can recognise a Helicase ATP-binding domain in the interval H39–A195. An ATP-binding site is contributed by A52–T59.

This sequence belongs to the herpesviridae OriBP family.

Functionally, probably involved in DNA replication. Binds the origin of replication (ori). The polypeptide is Replication origin-binding protein (U73) (Human herpesvirus 7 (strain JI) (HHV-7)).